We begin with the raw amino-acid sequence, 365 residues long: Forkhead box protein H1 (365 aa).

Residues 1–29 form a disordered region; the sequence is MGPCSGSRLGPPEAESPSQPPKRRKKRYL. The segment at residues 32–128 is a DNA-binding region (fork-head); the sequence is DKPPYTYLAM…ALRLQNTALC (97 aa). The disordered stretch occupies residues 151 to 215; the sequence is GRPYRPPSPP…TPPLPSSERP (65 aa). The span at 154–164 shows a compositional bias: pro residues; that stretch reads YRPPSPPPPPS. Positions 273 to 354 are SMAD-interaction domain (SID); that stretch reads LWGQLPTSYL…VSHPRDLAAP (82 aa). A Fast/FoxH1 motif 1 (FM1) motif is present at residues 277 to 281; the sequence is LPTSY. A Fast/FoxH1 motif 2 (FM2) motif is present at residues 287–293; the sequence is PNVVMPL. Positions 327–348 match the SMAD interaction motif (SIM) motif; it reads LDALFQGVPPNKSIYDVWVSHP.

In terms of assembly, interacts with the MH2 domains of SMAD2 and SMAD3. As to expression, ubiquitous.

The protein localises to the nucleus. Transcriptional activator. Recognizes and binds to the DNA sequence 5'-TGT[GT][GT]ATT-3'. Required for induction of the goosecoid (GSC) promoter by TGF-beta or activin signaling. Forms a transcriptionally active complex containing FOXH1/SMAD2/SMAD4 on a site on the GSC promoter called TARE (TGF-beta/activin response element). This is Forkhead box protein H1 (FOXH1) from Homo sapiens (Human).